Here is a 209-residue protein sequence, read N- to C-terminus: MHRIDTKTAQKDKFGAGKNGFTRGNPQTGTPATDLDDDYFDMLQEELCSVVEASGASLEKGRHDQLLTALRALLLSRKNPFGDIKSDGTVQTALENLGLGEGAKLNAATATLGRTGFIAIPVMIGGIEQSVIIQWGWNAAKASASGGDGNTVVFPVAFNNACVAVVANYDNVSAPINAVATGGYTTTSFLLRCAAQTGSYYYNWIAIGY.

Basic and acidic residues predominate over residues 1–15 (MHRIDTKTAQKDKFG). The interval 1–34 (MHRIDTKTAQKDKFGAGKNGFTRGNPQTGTPATD) is disordered. Residues 22–31 (TRGNPQTGTP) are compositionally biased toward polar residues.

To E.coli YfdL and M.jannaschii MJ0347.

This is an uncharacterized protein from Escherichia coli (strain K12).